We begin with the raw amino-acid sequence, 719 residues long: Protein psiJ (719 aa).

A signal peptide spans 1-21; it reads MVSNLLKGLILFSLFISFLNG. At 22-653 the chain is on the extracellular side; sequence DDKIFPVTIR…RCQSVAVKAG (632 aa). Asparagine 46, asparagine 59, asparagine 86, asparagine 113, asparagine 301, asparagine 372, asparagine 435, asparagine 457, asparagine 562, and asparagine 628 each carry an N-linked (GlcNAc...) asparagine glycan. The PA14 domain occupies 112 to 260; that stretch reads QNQTDPRVFY…KDYCGVCEGT (149 aa). Residues 654-674 traverse the membrane as a helical segment; the sequence is VIGGAAIAGVVVGGAVALGLA. Over 675 to 719 the chain is Cytoplasmic; it reads LFGAKAGYNHWMSLKNNQMATSSVNPLYEPSPHQGTNPLWEAPPT.

The protein belongs to the prespore-cell-inducing factor family.

The protein localises to the membrane. This Dictyostelium discoideum (Social amoeba) protein is Protein psiJ (psiJ).